Here is a 533-residue protein sequence, read N- to C-terminus: (E)-beta-farnesene synthase (533 aa).

Residues D286 and D290 each coordinate Mg(2+). The substrate site is built by D286, D290, R427, and N430. The short motif at 286–290 (DDMMD) is the DDXXD motif element. Residues N430 and E438 each contribute to the Mg(2+) site.

This sequence belongs to the terpene synthase family. As to quaternary structure, monomer. The cofactor is Mg(2+). Mn(2+) serves as cofactor.

It localises to the cytoplasm. It catalyses the reaction (2E,6E)-farnesyl diphosphate = (E)-beta-farnesene + diphosphate. The enzyme catalyses (2E,6E)-farnesyl diphosphate = alpha-copaene + diphosphate. It carries out the reaction (2E,6E)-farnesyl diphosphate = (1S,5S,6R)-alpha-bergamotene + diphosphate. The catalysed reaction is (2E,6E)-farnesyl diphosphate = (-)-(E)-beta-caryophyllene + diphosphate. It catalyses the reaction (2E,6E)-farnesyl diphosphate = delta-cadinene + diphosphate. The enzyme catalyses (2E,6E)-farnesyl diphosphate = (+)-germacrene D + diphosphate. It carries out the reaction (2E,6E)-farnesyl diphosphate = alpha-zingiberene + diphosphate. The catalysed reaction is (2E,6E)-farnesyl diphosphate = alpha-muurolene + diphosphate. It catalyses the reaction (2E,6E)-farnesyl diphosphate = (S)-beta-bisabolene + diphosphate. The enzyme catalyses (2E,6E)-farnesyl diphosphate = beta-sesquiphellandrene + diphosphate. It carries out the reaction (2E,6E)-farnesyl diphosphate = sesquisabinene A + diphosphate. Its pathway is secondary metabolite biosynthesis; terpenoid biosynthesis. Its function is as follows. Sesquiterpene cyclase catalyzing mainly the production of beta-farnesene and alpha-bergamotene in equal amounts from farnesyl diphosphate. Also mediates the biosynthesis of minor sesquiterpene hydrocarbons including alpha-muurolene, beta-bisabolene, zingiberene, sesquiphellandrene, sesquisabinene A, germacrene D, delta-cadinene, alpha-copaene and (E)-beta-caryophyllene. Involved in indirect defense by producing volatile signals attracting natural enemies of herbivores. The chain is (E)-beta-farnesene synthase from Zea mays (Maize).